A 555-amino-acid chain; its full sequence is Tetracycline 7-halogenase (555 aa).

22 to 27 (GSGLSG) is a binding site for FAD.

The protein belongs to the flavin-dependent halogenase family. Bacterial tryptophan halogenase subfamily. In terms of assembly, homodimer.

It catalyses the reaction tetracycline + FADH2 + chloride + O2 = 7-chlorotetracycline + FAD + 2 H2O + H(+). It participates in antibiotic biosynthesis. Functionally, involved in the biosynthesis of chlorotetracycline (CTC), an important member from antibiotics tetracycline (TC) family, which inhibits protein synthesis in bacteria and is widely involved in clinical therapy, animal feeds and aquaculture. Utilizes FADH(2) supplied by the flavin reductase CtcQ, to catalyze the chlorination of tetracycline (TC) at C7 position, leading to the production of 7-chlorotetracycline. The enzyme forms a lysine chloramine intermediate on an internal lysine residue before transferring the chlorine to the substrate. It is stereo-selective for the 4S (natural) isomer of tetracycline. This is Tetracycline 7-halogenase from Kitasatospora aureofaciens (Streptomyces aureofaciens).